A 720-amino-acid chain; its full sequence is Protein unc-112 (720 aa).

2 disordered regions span residues 145-170 (DLRR…ESVG) and 210-236 (MGTL…TMRR). One can recognise an FERM domain in the interval 288-614 (WLDSSRSLME…ALPEHGIHYF (327 aa)). The PH domain maps to 402-507 (VPELADYLKY…WMAACRLASR (106 aa)).

It belongs to the kindlin family. As to quaternary structure, interacts with pat-4/ILK. Probably forms a complex with pat-4 and pat-6. Component of an integrin containing attachment complex, composed of at least pat-2, pat-3, pat-4, pat-6, unc-52, unc-97 and unc-112. As to expression, mainly expressed in muscle cells in both embryos and adults.

It localises to the cell membrane. It is found in the cytoplasm. Its subcellular location is the myofibril. The protein resides in the sarcomere. The protein localises to the m line. Component of an integrin containing attachment complex, which is required for muscle development and maintenance. Probable regulator of cell-extracellular matrix adhesion. Required during initial muscle assembly to form dense bodies and M-lines. This is Protein unc-112 from Caenorhabditis elegans.